A 64-amino-acid polypeptide reads, in one-letter code: MGIKPTYIKKIGIELLEFHEEKFTNDFDENKKAVASATNVPSKRVRNRVAGYITRKINTGKFKK.

The protein belongs to the eukaryotic ribosomal protein eS17 family.

This chain is Small ribosomal subunit protein eS17, found in Methanospirillum hungatei JF-1 (strain ATCC 27890 / DSM 864 / NBRC 100397 / JF-1).